The chain runs to 460 residues: Jacalin-related lectin 36 (460 aa).

A Jacalin-type lectin 1 domain is found at 1–131 (MAAATMSWDD…LNSIDVHFAP (131 aa)). A2 bears the N-acetylalanine mark. Disordered regions lie at residues 34 to 57 (YDGD…VSLS), 133 to 162 (PSSS…WDDG), and 291 to 334 (SGRG…PHEG). Positions 133-143 (PSSSSSSSSLS) are enriched in low complexity. Residues 145 to 289 (ANKVDAQGGK…LNALGAYFAP (145 aa)) form the Jacalin-type lectin 2 domain. A compositionally biased stretch (polar residues) spans 292-309 (GRGTPSATQPPGSAQPTG). The 145-residue stretch at 313 to 457 (AKKLEAKGGN…IHQVGVHVKP (145 aa)) folds into the Jacalin-type lectin 3 domain.

It belongs to the jacalin lectin family.

The sequence is that of Jacalin-related lectin 36 (JAL36) from Arabidopsis thaliana (Mouse-ear cress).